We begin with the raw amino-acid sequence, 308 residues long: GTP-binding protein gtr1 (308 aa).

Residues serine 11, glycine 14, lysine 15, serine 16, serine 17, threonine 31, threonine 37, glycine 60, histidine 122, aspartate 125, and isoleucine 159 each contribute to the GTP site.

It belongs to the GTR/RAG GTP-binding protein family. Component of the GSE complex.

The protein resides in the vacuole membrane. It localises to the cytoplasm. Its subcellular location is the nucleus. The enzyme catalyses GTP + H2O = GDP + phosphate + H(+). Functionally, GTPase involved in activation of the TORC1 signaling pathway, which promotes growth and represses autophagy in nutrient-rich conditions. Also required for TORC1 inactivation during nitrogen starvation. The chain is GTP-binding protein gtr1 (gtr1) from Schizosaccharomyces pombe (strain 972 / ATCC 24843) (Fission yeast).